A 1037-amino-acid chain; its full sequence is Ribonuclease E (1037 aa).

Disordered stretches follow at residues 1 to 23, 47 to 90, and 106 to 369; these read MAED…LPER, FDGR…ETPV, and VSEA…PILS. The segment covering 47–67 has biased composition (basic and acidic residues); the sequence is FDGRQRSAHSTVDKADAERVR. 2 stretches are compositionally biased toward low complexity: residues 68-90 and 106-126; these read AALT…ETPV and VSEA…PAAE. Composition is skewed to acidic residues over residues 127–141 and 196–226; these read AEAE…EAET and VVDD…DDDQ. The span at 230–242 shows a compositional bias: basic residues; it reads PRRRRRGRRGRGR. A compositionally biased stretch (acidic residues) spans 248–284; sequence NDDATSDADTDSTEDQTDGDEQESGEDSDDSGDEDST. A compositionally biased stretch (basic residues) spans 291–301; sequence RRRRRRRRRKS. Residues 320–335 are compositionally biased toward basic and acidic residues; it reads VHERAPRTERSDKSDD. In terms of domain architecture, S1 motif spans 427–504; sequence GNIYLGIVQN…GHKGARLTTQ (78 aa). Residues 561–589 are a coiled coil; that stretch reads EDIRSDVERLQKRWSEIEAKAAEVTEKKA. The Mg(2+) site is built by aspartate 694 and aspartate 738. Cysteine 796 and cysteine 799 together coordinate Zn(2+). The segment at 810–1037 is disordered; the sequence is PIDSASSNGG…ARPAGPPSHD (228 aa). A compositionally biased stretch (basic residues) spans 834–843; the sequence is RRGKRGKKGA. Residues 844 to 864 are compositionally biased toward basic and acidic residues; that stretch reads ARTEEVHVAKVPDHTPGEHPM. The segment covering 879 to 891 has biased composition (acidic residues); it reads EDHEDHEDHETAE. The segment covering 897–913 has biased composition (basic and acidic residues); it reads EVRDDTRDEHDADERAH. Over residues 923-1006 the composition is skewed to acidic residues; that stretch reads GDEDLDDSDE…DSDSDEDEEP (84 aa).

The protein belongs to the RNase E/G family. As to quaternary structure, assembles into a homotetramer formed by a dimer of dimers. Interacts with DNA-binding protein HhupB. The cofactor is Mg(2+). It depends on Zn(2+) as a cofactor.

Its subcellular location is the cytoplasm. It carries out the reaction Endonucleolytic cleavage of single-stranded RNA in A- and U-rich regions.. Endoribonuclease that plays a central role in RNA processing and decay. Plays a major role in pre-16S rRNA maturation, probably generating the mature 5'-end, and a minor role in pre-5S and pre-23S rRNA maturation. Probably also processes tRNA. RNase E and HupB jointly contribute to cellular adaptation to changing growth conditions and survival during antibiotic treatment. Overexpression or depletion leads to changes in gene expression; overexpression induces metabolic slowdown and cell stress while depleted strains grow less well than induced strains. The sequence is that of Ribonuclease E (rne) from Mycolicibacterium smegmatis (strain ATCC 700084 / mc(2)155) (Mycobacterium smegmatis).